The sequence spans 243 residues: DNA repair protein RecO (243 aa).

This sequence belongs to the RecO family.

Its function is as follows. Involved in DNA repair and RecF pathway recombination. In Xylella fastidiosa (strain M23), this protein is DNA repair protein RecO.